We begin with the raw amino-acid sequence, 265 residues long: MICOS complex subunit Mic27 (265 aa).

The transit peptide at 1-27 (MAAFRMGKLTTIPAGLIYASINVRLAK) directs the protein to the mitochondrion. At 28 to 110 (EEEPKKQLVR…YVYLKNPPQD (83 aa)) the chain is on the mitochondrial intermembrane side. A helical membrane pass occupies residues 111 to 129 (FLPKMGVITASGLAGLLSA). Residues 130–137 (RKGSRFKK) are Mitochondrial matrix-facing. Residues 138 to 155 (IAYPLGLATLGATVCYPA) form a helical membrane-spanning segment. Topologically, residues 156–265 (QSVIIAKITG…DDKDMYSTRS (110 aa)) are mitochondrial intermembrane. Disordered regions lie at residues 187–215 (SENESLPEPKEESKEGRSDEIHASLPDLK) and 229–265 (VIKSESTSGTTQFIPDPKLMDHGQSHPDDKDMYSTRS). At Ser204 the chain carries Phosphoserine. A compositionally biased stretch (polar residues) spans 229-241 (VIKSESTSGTTQF). A compositionally biased stretch (basic and acidic residues) spans 246 to 265 (KLMDHGQSHPDDKDMYSTRS).

The protein belongs to the apolipoprotein O/MICOS complex subunit Mic27 family. In terms of assembly, component of the mitochondrial contact site and cristae organizing system (MICOS) complex, composed of at least MICOS10/MIC10, CHCHD3/MIC19, CHCHD6/MIC25, APOOL/MIC27, IMMT/MIC60, APOO/MIC23/MIC26 and MICOS13/MIC13. This complex was also known under the names MINOS or MitOS complex. The MICOS complex associates with mitochondrial outer membrane proteins SAMM50, MTX1 and MTX2 (together described as components of the mitochondrial outer membrane sorting assembly machinery (SAM) complex) and DNAJC11, mitochondrial inner membrane protein TMEM11 and with HSPA9. The MICOS and SAM complexes together with DNAJC11 are part of a large protein complex spanning both membranes termed the mitochondrial intermembrane space bridging (MIB) complex. Interacts with MICOS10/MIC10, IMMT/MIC60 and APOO/MIC23/MIC26.

It localises to the mitochondrion inner membrane. It is found in the mitochondrion. In terms of biological role, component of the MICOS complex, a large protein complex of the mitochondrial inner membrane that plays crucial roles in the maintenance of crista junctions, inner membrane architecture, and formation of contact sites to the outer membrane. Specifically binds to cardiolipin (in vitro) but not to the precursor lipid phosphatidylglycerol. Plays a crucial role in crista junction formation and mitochondrial function. The protein is MICOS complex subunit Mic27 (Apool) of Mus musculus (Mouse).